Reading from the N-terminus, the 1386-residue chain is DNA-directed RNA polymerase subunit beta'' (1386 aa).

Residues Cys-224, Cys-294, Cys-301, and Cys-304 each coordinate Zn(2+).

It belongs to the RNA polymerase beta' chain family. RpoC2 subfamily. As to quaternary structure, in plastids the minimal PEP RNA polymerase catalytic core is composed of four subunits: alpha, beta, beta', and beta''. When a (nuclear-encoded) sigma factor is associated with the core the holoenzyme is formed, which can initiate transcription. Zn(2+) is required as a cofactor.

Its subcellular location is the plastid. The protein localises to the chloroplast. It catalyses the reaction RNA(n) + a ribonucleoside 5'-triphosphate = RNA(n+1) + diphosphate. Its function is as follows. DNA-dependent RNA polymerase catalyzes the transcription of DNA into RNA using the four ribonucleoside triphosphates as substrates. The chain is DNA-directed RNA polymerase subunit beta'' from Acorus calamus (Sweet flag).